The chain runs to 167 residues: Type IV major pilin protein PilE (167 aa).

Residues 1 to 7 constitute a propeptide, leader sequence; sequence MNTLQKG. N-methylphenylalanine is present on phenylalanine 8. A helical transmembrane segment spans residues 8–28; it reads FTLIELMIVIAIVGILAAVAL. O-linked (GlcNAc...) serine glycosylation is present at serine 70. A disulfide bond links cysteine 127 and cysteine 160.

Belongs to the N-Me-Phe pilin family. As to quaternary structure, the pili are polar flexible filaments of about 5.4 nanometers diameter and 2.5 micrometers average length; they consist of only a single polypeptide chain arranged in a helical configuration of five subunits per turn in the assembled pilus.

The protein resides in the fimbrium. Its subcellular location is the membrane. Functionally, major component of the type IV pilus (T4P) that plays a role in cellular adherence, microcolony formation, resistance to neutrophil mediated killing, twitching motility as well as transformation. Mediates the attachment and the formation of bacterial microcolonies on host epithelial cells. Mechanistically, pili retractation induces host NF-kappa-B activation in infected cells, which is temporally associated with the formation of gonococcal microcolonies. This chain is Type IV major pilin protein PilE (pilE), found in Neisseria gonorrhoeae.